The chain runs to 524 residues: Ribonuclease Y (524 aa).

The chain crosses the membrane as a helical span at residues 2-22 (GIVINLFLIIAASIVFFVVGF). The KH domain maps to 214 to 299 (ALSVVHIQSD…KAYQDAKKEI (86 aa)). The 93-residue stretch at 340–432 (LLQHSREVAM…VDAANIVSLS (93 aa)) folds into the HD domain.

It belongs to the RNase Y family.

The protein localises to the cell membrane. Its function is as follows. Endoribonuclease that initiates mRNA decay. The polypeptide is Ribonuclease Y (Chlorobaculum tepidum (strain ATCC 49652 / DSM 12025 / NBRC 103806 / TLS) (Chlorobium tepidum)).